We begin with the raw amino-acid sequence, 400 residues long: Large envelope protein (400 aa).

An N-acetylmethionine modification is found at M1. G2 is lipidated: N-myristoyl glycine; by host. The interval 2–119 is pre-S1; sequence GAPLSTARRG…PPLRDTHPQA (118 aa). The pre-S stretch occupies residues 2-174; sequence GAPLSTARRG…FSKTGDPAMN (173 aa). The Virion surface; in external conformation portion of the chain corresponds to 2–181; it reads GAPLSTARRG…AMNMENITSG (180 aa). At 2–253 the chain is on the intravirion; in internal conformation side; the sequence is GAPLSTARRG…PGYRWMCLRR (252 aa). A glycan (N-linked (GlcNAc...) asparagine) is linked at P4. Positions 70-115 are disordered; it reads PHGGLLGWSPQAQGILTTSPPDPPPASTNRRSGRKPTPVSPPLRDT. The span at 79-88 shows a compositional bias: polar residues; the sequence is PQAQGILTTS. The interval 120 to 174 is pre-S2; the sequence is MQWNSTQFHQALLDPRVRGLYFPAGGSSSETQNPVPTIASLTSSIFSKTGDPAMN. The chain crosses the membrane as a helical span at residues 182–202; it reads LLGPLLVLQAVCFLLTKILTI. The Intravirion; in external conformation portion of the chain corresponds to 203 to 253; sequence PQSLDSWWTSLNFLGVPPGCPGQNSQSPISNHLPTSCPPTCPGYRWMCLRR. Residues 254–274 form a helical membrane-spanning segment; sequence FIIFLFILLLCLIFLLVLLDY. The Virion surface segment spans residues 275 to 348; it reads QGMLPVCPLL…WASARFSWLS (74 aa). Residue N320 is glycosylated (N-linked (GlcNAc...) asparagine; by host). The chain crosses the membrane as a helical span at residues 349 to 369; it reads LLVQFVQWCVGLSPTVWLLVI. The Intravirion portion of the chain corresponds to 370–375; sequence WMIWYW. The chain crosses the membrane as a helical span at residues 376–398; the sequence is GPNLCSILSPFIPLLPIFCYLWA. The Virion surface segment spans residues 399–400; sequence SI.

Belongs to the orthohepadnavirus major surface antigen family. In terms of assembly, in its internal form (Li-HBsAg), interacts with the capsid protein and with the isoform S. Interacts with host chaperone CANX. Associates with host chaperone CANX through its pre-S2 N glycan; this association may be essential for isoform M proper secretion. As to quaternary structure, interacts with isoform L. Interacts with the antigens of satellite virus HDV (HDVAgs); this interaction is required for encapsidation of HDV genomic RNA. Isoform M is N-terminally acetylated by host at a ratio of 90%, and N-glycosylated by host at the pre-S2 region. In terms of processing, myristoylated.

The protein localises to the virion membrane. The large envelope protein exists in two topological conformations, one which is termed 'external' or Le-HBsAg and the other 'internal' or Li-HBsAg. In its external conformation the protein attaches the virus to cell receptors and thereby initiating infection. This interaction determines the species specificity and liver tropism. This attachment induces virion internalization predominantly through caveolin-mediated endocytosis. The large envelope protein also assures fusion between virion membrane and endosomal membrane. In its internal conformation the protein plays a role in virion morphogenesis and mediates the contact with the nucleocapsid like a matrix protein. Functionally, the middle envelope protein plays an important role in the budding of the virion. It is involved in the induction of budding in a nucleocapsid independent way. In this process the majority of envelope proteins bud to form subviral lipoprotein particles of 22 nm of diameter that do not contain a nucleocapsid. The polypeptide is Large envelope protein (Homo sapiens (Human)).